A 412-amino-acid polypeptide reads, in one-letter code: Poly-beta-1,6-N-acetyl-D-glucosamine synthase (412 aa).

Transmembrane regions (helical) follow at residues 6–28 (FLLFYPVFMSIYWIVGSIYFYFT), 290–312 (LYILMFEQIISILWVYIVLLYLG), 332–354 (IFLLSSFTMTFINVIQFTVALFI), and 366–388 (LIFVSWYPTVYWIINAAVVLVAF).

It belongs to the glycosyltransferase 2 family.

It localises to the cell membrane. N-acetylglucosaminyltransferase that catalyzes the polymerization of single monomer units of UDP-N-acetylglucosamine to produce the linear homomer poly-beta-1,6-N-acetyl-D-glucosamine (PNAG, also referred to as PIA), a biofilm adhesin polysaccharide. Requires IcaD for full activity. This chain is Poly-beta-1,6-N-acetyl-D-glucosamine synthase (icaA), found in Staphylococcus aureus (strain MSSA476).